The sequence spans 101 residues: NAD(P)H-quinone oxidoreductase subunit 4L, chloroplastic (101 aa).

Transmembrane regions (helical) follow at residues 2–22 (ILEH…YGLI), 32–52 (MCLE…SDFF), and 61–81 (IFCI…LAIV).

It belongs to the complex I subunit 4L family. NDH is composed of at least 16 different subunits, 5 of which are encoded in the nucleus.

The protein resides in the plastid. The protein localises to the chloroplast thylakoid membrane. The enzyme catalyses a plastoquinone + NADH + (n+1) H(+)(in) = a plastoquinol + NAD(+) + n H(+)(out). It catalyses the reaction a plastoquinone + NADPH + (n+1) H(+)(in) = a plastoquinol + NADP(+) + n H(+)(out). Functionally, NDH shuttles electrons from NAD(P)H:plastoquinone, via FMN and iron-sulfur (Fe-S) centers, to quinones in the photosynthetic chain and possibly in a chloroplast respiratory chain. The immediate electron acceptor for the enzyme in this species is believed to be plastoquinone. Couples the redox reaction to proton translocation, and thus conserves the redox energy in a proton gradient. In Lepidium virginicum (Virginia pepperweed), this protein is NAD(P)H-quinone oxidoreductase subunit 4L, chloroplastic.